A 377-amino-acid polypeptide reads, in one-letter code: Protein-tyrosine sulfotransferase 2 (377 aa).

Residues 1–8 (MRLSMRRA) lie on the Cytoplasmic side of the membrane. The helical; Signal-anchor for type II membrane protein transmembrane segment at 9-25 (LLAAGLALALVLAVHLG) threads the bilayer. The Lumenal segment spans residues 26-377 (QRVLECQAVL…NSTSSHLGSS (352 aa)). 78–82 (RSGTT) contributes to the 3'-phosphoadenylyl sulfate binding site. A disulfide bond links C96 and C156. The active-site Proton donor/acceptor is the E99. The segment at 101 to 105 (RIIPR) is interaction with peptide substrate. 3 residues coordinate 3'-phosphoadenylyl sulfate: R183, S191, and R195. Residues C225 and C233 are joined by a disulfide bond. 3'-phosphoadenylyl sulfate contacts are provided by residues Y238, 285-294 (STDQVIKPVN), and K300. N-linked (GlcNAc...) asparagine glycosylation is found at N343 and N368.

The protein belongs to the protein sulfotransferase family. Homodimer. Can also form heterodimers with TPST1. N-glycosylated.

It is found in the golgi apparatus membrane. It catalyses the reaction L-tyrosyl-[protein] + 3'-phosphoadenylyl sulfate = O-sulfo-L-tyrosine-[protein] + adenosine 3',5'-bisphosphate + H(+). Its function is as follows. Catalyzes the O-sulfation of tyrosine residues within acidic motifs of polypeptides, using 3'-phosphoadenylyl sulfate (PAPS) as cosubstrate. In Bos taurus (Bovine), this protein is Protein-tyrosine sulfotransferase 2 (TPST2).